The chain runs to 126 residues: Small ribosomal subunit protein uS13 (126 aa).

The tract at residues 92-126 is disordered; that stretch reads HRRGLPVRGQRTKTNARTRKGPKRTVAGKKKAGRK.

This sequence belongs to the universal ribosomal protein uS13 family. In terms of assembly, part of the 30S ribosomal subunit. Forms a loose heterodimer with protein S19. Forms two bridges to the 50S subunit in the 70S ribosome.

Located at the top of the head of the 30S subunit, it contacts several helices of the 16S rRNA. In the 70S ribosome it contacts the 23S rRNA (bridge B1a) and protein L5 of the 50S subunit (bridge B1b), connecting the 2 subunits; these bridges are implicated in subunit movement. Contacts the tRNAs in the A and P-sites. The polypeptide is Small ribosomal subunit protein uS13 (Kineococcus radiotolerans (strain ATCC BAA-149 / DSM 14245 / SRS30216)).